The sequence spans 149 residues: Large ribosomal subunit protein uL15 (149 aa).

Residues 1–57 are disordered; that stretch reads MRLNDPKPKTGSQHRRRRVGRGIAAGQGASCGFGMRGQKSRSGRPTRPGFEGGQNPL. A compositionally biased stretch (gly residues) spans 23–35; the sequence is IAAGQGASCGFGM.

This sequence belongs to the universal ribosomal protein uL15 family. As to quaternary structure, part of the 50S ribosomal subunit.

Binds to the 23S rRNA. This chain is Large ribosomal subunit protein uL15, found in Acaryochloris marina (strain MBIC 11017).